The chain runs to 266 residues: Type II iodothyronine deiodinase (266 aa).

At 1–9 the chain is on the lumenal side; it reads MGLLSVDLL. A helical; Signal-anchor for type III membrane protein membrane pass occupies residues 10–34; the sequence is ITLQILPVFFSNCLFLALYDSVILL. Over 35–266 the chain is Cytoplasmic; that stretch reads KHVALLLSRS…KNFSKRUILD (232 aa). Sec-130 is an active-site residue. 2 non-standard amino acids (selenocysteine) are found at residues Sec-130 and Sec-263.

The protein belongs to the iodothyronine deiodinase family. As to quaternary structure, predominantly monomer. Can form homodimers but homodimerization is not essential for enzyme activity. Interacts with USP20 and USP33. Interacts with MARCHF6. In terms of processing, ubiquitinated by MARCHF6, leading to its degradation by the proteasome. Deubiquitinated by USP20 and USP33. Expressed in mammary gland and in brain.

Its subcellular location is the endoplasmic reticulum membrane. The catalysed reaction is 3,3',5-triiodo-L-thyronine + iodide + A + H(+) = L-thyroxine + AH2. It carries out the reaction 3,3'-diiodo-L-thyronine + iodide + A + H(+) = 3,3',5'-triiodo-L-thyronine + AH2. The enzyme catalyses 3'-iodo-L-thyronine + iodide + A + H(+) = 3',5'-diiodo-L-thyronine + AH2. It catalyses the reaction 3,3'-diiodothyronamine + iodide + A + H(+) = 3,3',5'-triiodothyronamine + AH2. The catalysed reaction is 3'-iodothyronamine + iodide + A + H(+) = 3',5'-diiodothyronamine + AH2. In terms of biological role, plays a crucial role in the metabolism of thyroid hormones (TH) and has specific roles in TH activation and inactivation by deiodination. Catalyzes the deiodination of L-thyroxine (T4) to 3,5,3'-triiodothyronine (T3) and 3,3',5'-triiodothyronine (rT3) to 3,3'-diiodothyronine (3,3'-T2) via outer-ring deiodination (ORD). Catalyzes the deiodination of 3',5'-diiodothyronine (3',5'-T2) to 3'-monoiodothyronine (3'-T1) via ORD. Catalyzes the phenolic ring deiodinations of 3,3',5'-triiodothyronamine and 3',5'- diiodothyronamine. The sequence is that of Type II iodothyronine deiodinase (Dio2) from Mus musculus (Mouse).